A 128-amino-acid polypeptide reads, in one-letter code: MLGVLLVLHGSKIPEWKDVGIKYAEYLSKYFSLVEFGFLEFNKPTLSEALSNLLAKGADKIVVVPLLFATGTHFRRDIPRLLGIDNDEKKIRYMGREIEITIADPLGFDEKIGEVLVKRVNETYNKNY.

Catalysis depends on His9, which acts as the Proton acceptor. His9 contacts Co(2+). Substrate-binding positions include Lys43 and 68 to 73; that span reads FATGTH. His73 contributes to the Co(2+) binding site.

Belongs to the CbiX family. CbiXS subfamily. Homotetramer; dimer of dimers.

It carries out the reaction Co-sirohydrochlorin + 2 H(+) = sirohydrochlorin + Co(2+). Its pathway is cofactor biosynthesis; adenosylcobalamin biosynthesis; cob(II)yrinate a,c-diamide from sirohydrochlorin (anaerobic route): step 1/10. Functionally, catalyzes the insertion of Co(2+) into sirohydrochlorin as part of the anaerobic pathway to cobalamin biosynthesis. The protein is Sirohydrochlorin cobaltochelatase of Saccharolobus solfataricus (strain ATCC 35092 / DSM 1617 / JCM 11322 / P2) (Sulfolobus solfataricus).